Here is a 313-residue protein sequence, read N- to C-terminus: Acetyl-coenzyme A carboxylase carboxyl transferase subunit alpha (313 aa).

The CoA carboxyltransferase C-terminal domain occupies 34-288 (KLKDQRDIAL…KNVVLEAVNE (255 aa)).

This sequence belongs to the AccA family. Acetyl-CoA carboxylase is a heterohexamer composed of biotin carboxyl carrier protein (AccB), biotin carboxylase (AccC) and two subunits each of ACCase subunit alpha (AccA) and ACCase subunit beta (AccD).

It is found in the cytoplasm. The catalysed reaction is N(6)-carboxybiotinyl-L-lysyl-[protein] + acetyl-CoA = N(6)-biotinyl-L-lysyl-[protein] + malonyl-CoA. The protein operates within lipid metabolism; malonyl-CoA biosynthesis; malonyl-CoA from acetyl-CoA: step 1/1. Its function is as follows. Component of the acetyl coenzyme A carboxylase (ACC) complex. First, biotin carboxylase catalyzes the carboxylation of biotin on its carrier protein (BCCP) and then the CO(2) group is transferred by the carboxyltransferase to acetyl-CoA to form malonyl-CoA. This Fusobacterium nucleatum subsp. nucleatum (strain ATCC 25586 / DSM 15643 / BCRC 10681 / CIP 101130 / JCM 8532 / KCTC 2640 / LMG 13131 / VPI 4355) protein is Acetyl-coenzyme A carboxylase carboxyl transferase subunit alpha.